Here is a 474-residue protein sequence, read N- to C-terminus: MATNWGSLLQNEQQLEELARQAVDRALAEGVLLRTSQEPTSSEVVSYAPFTLFPSLVPSALLEQAYAVQMDFNLLVDAVNQNAAFLEQTLSSTIEQDDFTARLFDIHKQVLKEGIAQTVFLGLNRSDYMFQRSTDGSPALKQIEINTISASFGGLASRTPAVHRHVLSVLSKTKEAGKILSNNPSKGLALGIAKAWELYGSTNALVLLIAQEKERNIFDQRAIENELLARNIHVIRRTFEDISEKGSLDQDRRLFVDGQEIAVVYFRDGYMPRQYSLQNWEARLLLERSCAAKCPDIATQLAGTKKVQQELSRPGMLEMLLPGQPEAVARLRATFAGLYSLDMGEEGDQAIAKALAAPSRFVLKPQREGGGNNLYGEEMVQALKQLKDSEERASYILMEKTEPEPFENCLLRPGSPAQVVQCISELGIFGVYVRHEKTLVMNKHVGHLLRTKAIEHADGGVAAGVAVLDNPYPV.

The residue at position 2 (alanine 2) is an N-acetylalanine. Residue arginine 125 coordinates substrate. Glutamate 144 contacts ATP. Residues glutamate 144 and asparagine 146 each coordinate Mg(2+). Residues isoleucine 148–serine 151, glutamate 214–asparagine 216, glutamine 220, and arginine 267–tyrosine 270 contribute to the substrate site. Residues lysine 305, lysine 364 to asparagine 373, tyrosine 375, and methionine 398 to threonine 401 contribute to the ATP site. Residue glutamate 368 participates in Mg(2+) binding. At serine 415 the chain carries Phosphoserine. Glutamate 425 serves as a coordination point for ATP. Arginine 450 provides a ligand contact to substrate. The ATP site is built by lysine 452 and aspartate 458. Valine 461–alanine 462 contributes to the substrate binding site.

The protein belongs to the eukaryotic GSH synthase family. In terms of assembly, homodimer. It depends on Mg(2+) as a cofactor.

It catalyses the reaction gamma-L-glutamyl-L-cysteine + glycine + ATP = glutathione + ADP + phosphate + H(+). Its pathway is sulfur metabolism; glutathione biosynthesis; glutathione from L-cysteine and L-glutamate: step 2/2. Catalyzes the production of glutathione from gamma-glutamylcysteine and glycine in an ATP-dependent manner. Glutathione (gamma-glutamylcysteinylglycine, GSH) is the most abundant intracellular thiol in living aerobic cells and is required for numerous processes including the protection of cells against oxidative damage, amino acid transport, the detoxification of foreign compounds, the maintenance of protein sulfhydryl groups in a reduced state and acts as a cofactor for a number of enzymes. This is Glutathione synthetase (GSS) from Macaca fascicularis (Crab-eating macaque).